Here is a 498-residue protein sequence, read N- to C-terminus: Cytochrome P450 monooxygenase aflU (498 aa).

A helical transmembrane segment spans residues 5-27; it reads TVYTSLIGLLVALTVRSIYRVYF. N-linked (GlcNAc...) asparagine glycosylation is found at N259 and N354. C438 lines the heme pocket.

This sequence belongs to the cytochrome P450 family. Requires heme as cofactor.

It localises to the membrane. It participates in mycotoxin biosynthesis; aflatoxin biosynthesis. Its function is as follows. Cytochrome P450 monooxygenase; part of the gene cluster that mediates the biosynthesis of aflatoxins, a group of polyketide-derived furanocoumarins, and part of the most toxic and carcinogenic compounds among the known mycotoxins. The four major aflatoxins produced by A.parasiticus are aflatoxin B1 (AFB1), aflatoxin B2 (AFB2), aflatoxin G1 (AFG1) and aflatoxin G2 (AFG2). Within the aflatoxin pathway, the cytochrome P450 monooxygenase aflU is involved in the last steps in which OMST is converted to aflatoxins B1 and G1, and DHOMST to aflatoxins B2 and G2. The biosynthesis of aflatoxins begins with the norsolorinic acid synthase aflC that combines a hexanoyl starter unit produced by the fatty acid synthase aflA/aflB and 7 malonyl-CoA extender units to synthesize the precursor NOR. The second step is the conversion of NOR to averantin and requires the norsolorinic acid ketoreductase aflD, which catalyzes the dehydration of norsolorinic acid to form (1'S)-averantin. The norsolorinic acid reductases aflE and aflF may also play a role in the conversion of NOR to AVN. The cytochrome P450 monooxygenase aflG then catalyzes the hydroxylation of AVN to 5'hydroxyaverantin (HAVN). The next step is performed by the 5'-hydroxyaverantin dehydrogenase aflH that transforms HAVN to 5'-oxoaverantin (OAVN) which is further converted to averufin (AVF) by aflK that plays a dual role in the pathway, as a 5'-oxoaverantin cyclase that mediates conversion of 5'-oxoaverantin, as well as a versicolorin B synthase in a later step in the pathway. The averufin oxidase aflI catalyzes the conversion of AVF to versiconal hemiacetal acetate (VHA). VHA is then the substrate for the versiconal hemiacetal acetate esterase aflJ to yield versiconal (VAL). Versicolorin B synthase aflK then converts VAL to versicolorin B (VERB) by closing the bisfuran ring of aflatoxin which is required for DNA-binding, thus giving to aflatoxin its activity as a mutagen. Then, the activity of the versicolorin B desaturase aflL leads to versicolorin A (VERA). A branch point starts from VERB since it can also be converted to dihydrodemethylsterigmatocystin (DMDHST), probably also by aflL, VERA being a precursor for aflatoxins B1 and G1, and DMDHST for aflatoxins B2 and G2. Next, the versicolorin reductase aflM and the cytochrome P450 monooxygenase aflN are involved in conversion of VERA to demethylsterigmatocystin (DMST). AflX and aflY seem also involved in this step, through probable aflX-mediated epoxide ring-opening step following versicolorin A oxidation and aflY-mediated Baeyer-Villiger oxidation required for the formation of the xanthone ring. The methyltransferase aflO then leads to the modification of DMST to sterigmatocystin (ST), and of DMDHST to dihydrosterigmatocystin (DHST). Both ST and DHST are then substrates of the O-methyltransferase aflP to yield O-methylsterigmatocystin (OMST) and dihydro-O-methylsterigmatocystin (DHOMST), respectively. Finally OMST is converted to aflatoxins B1 and G1, and DHOMST to aflatoxins B2 and G2, via the action of several enzymes including O-methylsterigmatocystin oxidoreductase aflQ, the cytochrome P450 monooxygenase aflU, but also the NADH-dependent flavin oxidoreductase nadA which is specifically required for the synthesis of AFG1. This is Cytochrome P450 monooxygenase aflU from Aspergillus parasiticus (strain ATCC 56775 / NRRL 5862 / SRRC 143 / SU-1).